The following is a 180-amino-acid chain: Small ribosomal subunit protein uS5 (180 aa).

Residues 24-87 (MIEKLVAVNR…EQARKNLVSV (64 aa)) enclose the S5 DRBM domain.

It belongs to the universal ribosomal protein uS5 family. As to quaternary structure, part of the 30S ribosomal subunit. Contacts proteins S4 and S8.

With S4 and S12 plays an important role in translational accuracy. In terms of biological role, located at the back of the 30S subunit body where it stabilizes the conformation of the head with respect to the body. This chain is Small ribosomal subunit protein uS5, found in Stenotrophomonas maltophilia (strain R551-3).